Here is a 963-residue protein sequence, read N- to C-terminus: Kinesin-1 heavy chain (963 aa).

Position 2 is an N-acetylalanine (Ala-2). The region spanning 8–325 (NIKVMCRFRP…LLFGQRAKTI (318 aa)) is the Kinesin motor domain. Residue 85 to 92 (GQTSSGKT) participates in ATP binding. Lys-213 is covalently cross-linked (Glycyl lysine isopeptide (Lys-Gly) (interchain with G-Cter in SUMO2)). Positions 330-913 (CVNVELTAEQ…EAVRSKNMAR (584 aa)) form a coiled coil. A disordered region spans residues 908 to 963 (SKNMARRGHSAQIAKPIRPGQHPAASPTHPGAVRGGGSFVQNNQPVGLRGGGGKQA). The segment at 915–963 (GHSAQIAKPIRPGQHPAASPTHPGAVRGGGSFVQNNQPVGLRGGGGKQA) is globular. Residues Ser-933 and Ser-945 each carry the phosphoserine modification. Arg-956 carries the post-translational modification Omega-N-methylarginine.

This sequence belongs to the TRAFAC class myosin-kinesin ATPase superfamily. Kinesin family. Kinesin subfamily. As to quaternary structure, oligomer composed of two heavy chains and two light chains. Interacts with GRIP1 and PPP1R42. Interacts with SYBU. Interacts with JAKMIP1. Interacts with PLEKHM2. Interacts with ECPAS. Interacts with ZFYVE27. Found in a complex with OGT, RHOT1, RHOT2 and TRAK1. Interacts with APP (via cytoplasmic domain). As to expression, expressed in the brain (at protein level). Expressed in the brain, liver, kidney, spleen, heart, lung and sciatic nerve.

It localises to the cytoplasm. The protein localises to the cytoskeleton. It is found in the cytolytic granule membrane. Its subcellular location is the lysosome membrane. Microtubule-dependent motor required for normal distribution of mitochondria and lysosomes. Can induce formation of neurite-like membrane protrusions in non-neuronal cells in a ZFYVE27-dependent manner. Regulates centrosome and nuclear positioning during mitotic entry. During the G2 phase of the cell cycle in a BICD2-dependent manner, antagonizes dynein function and drives the separation of nuclei and centrosomes. Required for anterograde axonal transportation of MAPK8IP3/JIP3 which is essential for MAPK8IP3/JIP3 function in axon elongation. Through binding with PLEKHM2 and ARL8B, directs lysosome movement toward microtubule plus ends. Involved in NK cell-mediated cytotoxicity. Drives the polarization of cytolytic granules and microtubule-organizing centers (MTOCs) toward the immune synapse between effector NK lymphocytes and target cells. In Rattus norvegicus (Rat), this protein is Kinesin-1 heavy chain.